The sequence spans 142 residues: Large ribosomal subunit protein uL11 (142 aa).

It belongs to the universal ribosomal protein uL11 family. As to quaternary structure, part of the ribosomal stalk of the 50S ribosomal subunit. Interacts with L10 and the large rRNA to form the base of the stalk. L10 forms an elongated spine to which L12 dimers bind in a sequential fashion forming a multimeric L10(L12)X complex. In terms of processing, one or more lysine residues are methylated.

Functionally, forms part of the ribosomal stalk which helps the ribosome interact with GTP-bound translation factors. In Mycolicibacterium gilvum (strain PYR-GCK) (Mycobacterium gilvum (strain PYR-GCK)), this protein is Large ribosomal subunit protein uL11.